The primary structure comprises 325 residues: Tartrate-resistant acid phosphatase type 5 (325 aa).

The signal sequence occupies residues 1 to 21 (MDTWTLLLVLHTSLLLPWAEG). N-linked (GlcNAc...) asparagine glycosylation is found at Asn116 and Asn147.

As to quaternary structure, exists either as monomer or, after proteolytic processing, as a dimer of two chains linked by disulfide bond(s). Fe cation is required as a cofactor.

It is found in the lysosome. It carries out the reaction a phosphate monoester + H2O = an alcohol + phosphate. This chain is Tartrate-resistant acid phosphatase type 5 (ACP5), found in Oryctolagus cuniculus (Rabbit).